The chain runs to 475 residues: Protein trichome birefringence-like 6 (475 aa).

A helical; Signal-anchor for type II membrane protein membrane pass occupies residues 14-34 (VLAFIITIISSAIVFFTFFSS). Residues 211 to 213 (GDS) carry the GDS motif motif. Residues 450–464 (DCSHWCLPGVPDTWN) carry the DCXHWCLPGXXDXWN motif motif.

The protein belongs to the PC-esterase family. TBL subfamily.

It is found in the membrane. Its function is as follows. May act as a bridging protein that binds pectin and other cell wall polysaccharides. Probably involved in maintaining esterification of pectins. May be involved in the specific O-acetylation of cell wall polymers. The sequence is that of Protein trichome birefringence-like 6 (TBL6) from Arabidopsis thaliana (Mouse-ear cress).